The primary structure comprises 394 residues: Chalcone synthase 8 (394 aa).

Cys165 is an active-site residue.

Belongs to the thiolase-like superfamily. Chalcone/stilbene synthases family.

The enzyme catalyses (E)-4-coumaroyl-CoA + 3 malonyl-CoA + 3 H(+) = 2',4,4',6'-tetrahydroxychalcone + 3 CO2 + 4 CoA. It functions in the pathway secondary metabolite biosynthesis; flavonoid biosynthesis. Its function is as follows. The primary product of this enzyme is 4,2',4',6'-tetrahydroxychalcone (also termed naringenin-chalcone or chalcone) which can under specific conditions spontaneously isomerize into naringenin. The protein is Chalcone synthase 8 (CHS8) of Bromheadia finlaysoniana (Orchid).